The primary structure comprises 256 residues: Ubiquinone/menaquinone biosynthesis C-methyltransferase UbiE (256 aa).

A compositionally biased stretch (polar residues) spans 1 to 19; that stretch reads MQNRSSSPDSSSAGNTHFG. Residues 1 to 24 are disordered; sequence MQNRSSSPDSSSAGNTHFGFQSVP. S-adenosyl-L-methionine-binding positions include T81, D102, and 128–129; that span reads DA.

This sequence belongs to the class I-like SAM-binding methyltransferase superfamily. MenG/UbiE family.

The enzyme catalyses a 2-demethylmenaquinol + S-adenosyl-L-methionine = a menaquinol + S-adenosyl-L-homocysteine + H(+). It carries out the reaction a 2-methoxy-6-(all-trans-polyprenyl)benzene-1,4-diol + S-adenosyl-L-methionine = a 5-methoxy-2-methyl-3-(all-trans-polyprenyl)benzene-1,4-diol + S-adenosyl-L-homocysteine + H(+). The protein operates within quinol/quinone metabolism; menaquinone biosynthesis; menaquinol from 1,4-dihydroxy-2-naphthoate: step 2/2. It functions in the pathway cofactor biosynthesis; ubiquinone biosynthesis. Its function is as follows. Methyltransferase required for the conversion of demethylmenaquinol (DMKH2) to menaquinol (MKH2) and the conversion of 2-polyprenyl-6-methoxy-1,4-benzoquinol (DDMQH2) to 2-polyprenyl-3-methyl-6-methoxy-1,4-benzoquinol (DMQH2). The chain is Ubiquinone/menaquinone biosynthesis C-methyltransferase UbiE from Bordetella avium (strain 197N).